We begin with the raw amino-acid sequence, 135 residues long: ATP synthase epsilon chain (135 aa).

Belongs to the ATPase epsilon chain family. F-type ATPases have 2 components, CF(1) - the catalytic core - and CF(0) - the membrane proton channel. CF(1) has five subunits: alpha(3), beta(3), gamma(1), delta(1), epsilon(1). CF(0) has three main subunits: a, b and c.

It localises to the cell inner membrane. Its function is as follows. Produces ATP from ADP in the presence of a proton gradient across the membrane. In Rhizobium etli (strain ATCC 51251 / DSM 11541 / JCM 21823 / NBRC 15573 / CFN 42), this protein is ATP synthase epsilon chain.